The following is a 270-amino-acid chain: uncharacterized protein (270 aa).

The interval 166–186 (RRKENNISNESVSEEPESPLF) is disordered.

This is an uncharacterized protein from Ostreid herpesvirus 1 (isolate France) (OsHV-1).